Consider the following 81-residue polypeptide: Photosystem I iron-sulfur center (81 aa).

2 4Fe-4S ferredoxin-type domains span residues 2-31 (SHSV…MIPW) and 39-68 (IASA…VRVY). Residues Cys-11, Cys-14, Cys-17, Cys-21, Cys-48, Cys-51, Cys-54, and Cys-58 each contribute to the [4Fe-4S] cluster site.

The eukaryotic PSI reaction center is composed of at least 11 subunits. Requires [4Fe-4S] cluster as cofactor.

It is found in the plastid thylakoid membrane. It carries out the reaction reduced [plastocyanin] + hnu + oxidized [2Fe-2S]-[ferredoxin] = oxidized [plastocyanin] + reduced [2Fe-2S]-[ferredoxin]. Functionally, apoprotein for the two 4Fe-4S centers FA and FB of photosystem I (PSI); essential for photochemical activity. FB is the terminal electron acceptor of PSI, donating electrons to ferredoxin. The C-terminus interacts with PsaA/B/D and helps assemble the protein into the PSI complex. Required for binding of PsaD and PsaE to PSI. PSI is a plastocyanin-ferredoxin oxidoreductase, converting photonic excitation into a charge separation, which transfers an electron from the donor P700 chlorophyll pair to the spectroscopically characterized acceptors A0, A1, FX, FA and FB in turn. In Cuscuta reflexa (Southern Asian dodder), this protein is Photosystem I iron-sulfur center.